A 2360-amino-acid polypeptide reads, in one-letter code: Protein Ycf2 (2360 aa).

3 disordered regions span residues 172-193 (SSQL…GTED), 225-255 (TEIE…EMNN), and 944-995 (KRKK…KRKE). Low complexity predominate over residues 234–244 (KGLSGSSSKSR). Positions 245 to 254 (LFTEGEKEMN) are enriched in basic and acidic residues. Basic residues predominate over residues 944 to 959 (KRKKKKPEKRKKKKPE). Positions 960 to 993 (KRKEKKPEKRKEKKPEKRKEKKPEKRKEKKPEKR) are enriched in basic and acidic residues. 1425–1432 (GSIGSGRS) contributes to the ATP binding site. 3 disordered regions span residues 1499-1518 (YEDR…YEPG), 1843-2031 (LVGS…LLRP), and 2098-2214 (PAEE…DGFS). The segment covering 1849–2011 (TEEEVEGTEE…VEGTEDEEVE (163 aa)) has biased composition (acidic residues). Positions 2012–2024 (GTEKDSSQFDNDR) are enriched in basic and acidic residues. Composition is skewed to acidic residues over residues 2098–2115 (PAEE…EALE) and 2122–2197 (GEEE…ENDS).

The protein belongs to the Ycf2 family.

Its subcellular location is the plastid. It localises to the chloroplast stroma. In terms of biological role, probable ATPase of unknown function. Its presence in a non-photosynthetic plant (Epifagus virginiana) and experiments in tobacco indicate that it has an essential function which is probably not related to photosynthesis. This is Protein Ycf2 from Oenothera argillicola (Appalachian evening primrose).